The following is a 105-amino-acid chain: Phosphoribosyl-ATP pyrophosphatase (105 aa).

The protein belongs to the PRA-PH family.

Its subcellular location is the cytoplasm. It catalyses the reaction 1-(5-phospho-beta-D-ribosyl)-ATP + H2O = 1-(5-phospho-beta-D-ribosyl)-5'-AMP + diphosphate + H(+). Its pathway is amino-acid biosynthesis; L-histidine biosynthesis; L-histidine from 5-phospho-alpha-D-ribose 1-diphosphate: step 2/9. The protein is Phosphoribosyl-ATP pyrophosphatase of Ruegeria pomeroyi (strain ATCC 700808 / DSM 15171 / DSS-3) (Silicibacter pomeroyi).